Reading from the N-terminus, the 614-residue chain is Serine/threonine-protein kinase-like protein E (614 aa).

The Protein kinase domain occupies 15–404; sequence YLIQLHLGQN…NPNTNGAPLS (390 aa). ATP is bound at residue 21-29; it reads LGQNSLGQQ. Over residues 256 to 269 the composition is skewed to polar residues; sequence PEQTDNGVGKSSTG. A disordered region spans residues 256-284; that stretch reads PEQTDNGVGKSSTGEPPFPTVHQSPESSS.

It belongs to the protein kinase superfamily. Ser/Thr protein kinase family.

In terms of biological role, lacks protein kinase activity. This chain is Serine/threonine-protein kinase-like protein E (spkE), found in Synechocystis sp. (strain ATCC 27184 / PCC 6803 / Kazusa).